The following is a 452-amino-acid chain: MSATKSAGPTTLANHLDKEVKTDVLGAIDSDKLTEATQGDHKAINEEYKIWKKNSPYLYNVVIATVMDHPTLTVEWLPDLFDDITPGSMSARLMFGSHSSGLDKDYIHVASVELPTHLRPETIGLLSQQEGGTDMKQHHDAHGRHKRIAIVQSIYEDGEVNVARYNPLASKQIAAAHVTGDIHIFDRNNIMNSKEEAKPIYNLKHHTKEGWGLNWNINHADQLVSGAIDSTVAFWKIPEAASDGSCKDVTPHTVYHHDAAVNDVKFSYKMDFLIGSASDDCTLRLWDTRKPGNKAACTIKESRGINSLDFNPHSEFLVATGSADETVKVWDMRKMDTPISQLYSHCDEVTKVQWCPHQPSVLASGGHDRAILVWDIARLHDDLSSDENDEGPPELLFHHGGHSSRISDFDWHPTLPWVIASAAEDNVIQVWRMAESISNDEAVPADDVDMED.

WD repeat units follow at residues 155–195 (YEDG…NSKE), 205–245 (HHTK…SDGS), 256–296 (HHDA…NKAA), 300–340 (KESR…TPIS), 344–384 (SHCD…DDLS), and 401–441 (GHSS…SNDE).

Belongs to the WD repeat RBAP46/RBAP48/MSI1 family. As to quaternary structure, component of the HAT-B complex composed of at least HAT1 and HAT2. The HAT-B complex binds to histone H4 tail.

It localises to the cytoplasm. The protein resides in the nucleus. In terms of biological role, regulatory subunit of the histone acetylase B (HAT-B) complex. The complex acetylates 'Lys-12' of histone H4 which is required for telomeric silencing. This is Histone acetyltransferase type B subunit 2 (HAT2) from Yarrowia lipolytica (strain CLIB 122 / E 150) (Yeast).